The sequence spans 293 residues: Protease HtpX (293 aa).

Helical transmembrane passes span 4-24 (IALF…VLSL) and 34-54 (GLLI…LLMS). His-139 is a binding site for Zn(2+). Residue Glu-140 is part of the active site. His-143 lines the Zn(2+) pocket. A run of 2 helical transmembrane segments spans residues 158–178 (VVNT…AGFM) and 193–213 (LIYF…ASII). Glu-222 contacts Zn(2+).

The protein belongs to the peptidase M48B family. Requires Zn(2+) as cofactor.

The protein localises to the cell inner membrane. The chain is Protease HtpX from Enterobacter sp. (strain 638).